The sequence spans 62 residues: MATKTLKVTQTKSSIGRLPKHRATLTGLGLRRINHTVEVEDTPSVRGMINKVYYMVSVEELG.

Belongs to the universal ribosomal protein uL30 family. In terms of assembly, part of the 50S ribosomal subunit.

This is Large ribosomal subunit protein uL30 from Shewanella frigidimarina (strain NCIMB 400).